The following is a 317-amino-acid chain: ADP-L-glycero-D-manno-heptose-6-epimerase (317 aa).

NADP(+) contacts are provided by residues 10-11 (FI), 31-32 (DD), K38, K53, 75-79 (QGACS), and N92. Y139 functions as the Proton acceptor in the catalytic mechanism. K143 is a binding site for NADP(+). N166 contacts substrate. Residues V167 and K175 each contribute to the NADP(+) site. K175 (proton acceptor) is an active-site residue. Substrate-binding positions include G177, H184, 198–201 (FQGH), R211, and Y275.

The protein belongs to the NAD(P)-dependent epimerase/dehydratase family. HldD subfamily. Homopentamer. The cofactor is NADP(+).

It catalyses the reaction ADP-D-glycero-beta-D-manno-heptose = ADP-L-glycero-beta-D-manno-heptose. It functions in the pathway nucleotide-sugar biosynthesis; ADP-L-glycero-beta-D-manno-heptose biosynthesis; ADP-L-glycero-beta-D-manno-heptose from D-glycero-beta-D-manno-heptose 7-phosphate: step 4/4. Catalyzes the interconversion between ADP-D-glycero-beta-D-manno-heptose and ADP-L-glycero-beta-D-manno-heptose via an epimerization at carbon 6 of the heptose. The sequence is that of ADP-L-glycero-D-manno-heptose-6-epimerase from Shewanella loihica (strain ATCC BAA-1088 / PV-4).